We begin with the raw amino-acid sequence, 610 residues long: UvrABC system protein C (610 aa).

Positions 16–94 (SQPGVYRMYD…IKLYQPRYNV (79 aa)) constitute a GIY-YIG domain. One can recognise a UVR domain in the interval 204 to 239 (DQVLNQLVARMEQASGDLRFEEAGRLRDQIQAVRRV).

This sequence belongs to the UvrC family. As to quaternary structure, interacts with UvrB in an incision complex.

The protein resides in the cytoplasm. The UvrABC repair system catalyzes the recognition and processing of DNA lesions. UvrC both incises the 5' and 3' sides of the lesion. The N-terminal half is responsible for the 3' incision and the C-terminal half is responsible for the 5' incision. This is UvrABC system protein C from Erwinia tasmaniensis (strain DSM 17950 / CFBP 7177 / CIP 109463 / NCPPB 4357 / Et1/99).